We begin with the raw amino-acid sequence, 226 residues long: Adenylate kinase (226 aa).

An ATP-binding site is contributed by 11 to 16 (GSGKGT). The interval 31 to 64 (SAGEILKHALSVTKFHFNFNTDNMLNQINSGNLV) is NMP. AMP contacts are provided by residues 62 to 64 (NLV), 90 to 93 (GFPR), and Q97. Positions 127-164 (GRQVHIKSGRTYHIKFNPPKLDGIDDITGEKLVIRADD) are LID. ATP is bound by residues R128 and 137-138 (TY). AMP-binding residues include R161 and R172. Q205 provides a ligand contact to ATP.

Belongs to the adenylate kinase family. In terms of assembly, monomer.

The protein resides in the cytoplasm. The enzyme catalyses AMP + ATP = 2 ADP. It functions in the pathway purine metabolism; AMP biosynthesis via salvage pathway; AMP from ADP: step 1/1. Its function is as follows. Catalyzes the reversible transfer of the terminal phosphate group between ATP and AMP. Plays an important role in cellular energy homeostasis and in adenine nucleotide metabolism. This chain is Adenylate kinase, found in Blochmanniella floridana.